The chain runs to 526 residues: Ubiquitin carboxyl-terminal hydrolase 17-like protein A (526 aa).

Residues 1-21 (MVVALSFPEADPALSSPDAPE) are disordered. One can recognise a USP domain in the interval 51-348 (CGLQNTGNSC…NAYVLFYVQQ (298 aa)). Cys60 functions as the Nucleophile in the catalytic mechanism. The active-site Proton acceptor is His307. A compositionally biased stretch (basic residues) spans 374–385 (KKSRRKKHKKKS). 2 disordered regions span residues 374 to 394 (KKSR…LGEP) and 465 to 494 (RSTA…SQGP). Basic and acidic residues predominate over residues 473-486 (DSPDKENQPLHNAD).

The protein belongs to the peptidase C19 family. In terms of processing, polyubiquitinated; ubiquitination leads to its subsequent degradation. Expressed in hematopoietic progenitor cell lines Ba/F3 and FDCP1. Not detected in brain, lung, liver, kidney, thymus, spleen and bone marrow.

It catalyses the reaction Thiol-dependent hydrolysis of ester, thioester, amide, peptide and isopeptide bonds formed by the C-terminal Gly of ubiquitin (a 76-residue protein attached to proteins as an intracellular targeting signal).. Its function is as follows. Deubiquitinating enzyme that removes conjugated ubiquitin from specific proteins to regulate different cellular processes. Has deubiquitinating enzyme activity for DNAH5, suggesting a role in the regulation of DNAH5 degradation by the ubiquitin-proteasome pathway. Has growth-suppressing activity; induces arrest in G1 phase upon controlled expression. This Mus musculus (Mouse) protein is Ubiquitin carboxyl-terminal hydrolase 17-like protein A (Usp17la).